We begin with the raw amino-acid sequence, 1324 residues long: RNA2 polyprotein (1324 aa).

It belongs to the nepoviruses RNA2 polyprotein family. In terms of processing, specific enzymatic cleavages in vivo by the P1 encoded 3C-like protease yield mature proteins. Post-translationally, the N-terminus of the coat protein is blocked.

It is found in the host cell junction. The protein localises to the host plasmodesma. It localises to the host cytoplasm. The protein resides in the host nucleus. Its subcellular location is the virion. Its function is as follows. Implicated in RNA2 replication. Could also be required for nematode transmission of the virus. Functionally, transports viral genome to neighboring plant cells directly through plasmosdesmata, without any budding. The movement protein allows efficient cell to cell propagation, by bypassing the host cell wall barrier. Acts by forming a tubular structure at the host plasmodesmata, enlarging it enough to allow free passage of virion capsids. This chain is RNA2 polyprotein, found in Apium graveolens (Celery).